Consider the following 123-residue polypeptide: MASSGQLLKLVCLVAVMCCMAVGGPKAMAAVSCGQVVNNLTPCINYVANGGALNPSCCTGVRSLYSLAQTTADRQSICNCLKQAVNGIPYTNANAGLAAGLPGKCGVNIPYKISPSTDCKSIK.

A signal peptide spans 1–25 (MASSGQLLKLVCLVAVMCCMAVGGP). Cystine bridges form between Cys-33–Cys-80, Cys-43–Cys-57, Cys-58–Cys-105, and Cys-78–Cys-119.

It belongs to the plant LTP family.

Functionally, plant non-specific lipid-transfer proteins transfer phospholipids as well as galactolipids across membranes. May play a role in wax or cutin deposition in the cell walls of expanding epidermal cells and certain secretory tissues. The protein is Non-specific lipid-transfer protein 3 of Prunus dulcis (Almond).